Here is a 175-residue protein sequence, read N- to C-terminus: MAKKVAVLAVNPVNGCGLFQYLEAFFENGISYKVFAVSDTKEIKTNSGMVLIVDDVIANLKGHEDEFDALVFSCGDAVPVFQQYANQPYNVDLMEVIKTFGEKGKMMIGHCAGAMMFDFTGITKGKKVAVHPLAKPAIQNGIATDEKSEIDGNFFTAQDENTIWTMLPKVIEALK.

Zn(2+) is bound by residues Cys-74 and Cys-111. 2 residues coordinate riboflavin: Asn-161 and Trp-164.

As to quaternary structure, homodimer.

Its function is as follows. Binds flavin derivatives, such as lumichrome, riboflavin, FMN, and FAD. May act as a flavin storage protein. Appears to lack proteolytic or chaperone activities. The chain is Protein ppBat from Bacteroides thetaiotaomicron (strain ATCC 29148 / DSM 2079 / JCM 5827 / CCUG 10774 / NCTC 10582 / VPI-5482 / E50).